Reading from the N-terminus, the 69-residue chain is Small, acid-soluble spore protein A (69 aa).

It belongs to the alpha/beta-type SASP family.

SASP are bound to spore DNA. They are double-stranded DNA-binding proteins that cause DNA to change to an a-like conformation. They protect the DNA backbone from chemical and enzymatic cleavage and are thus involved in dormant spore's high resistance to UV light. This chain is Small, acid-soluble spore protein A (sspA), found in Bacillus subtilis (strain 168).